The chain runs to 157 residues: Endoribonuclease YbeY (157 aa).

Zn(2+) is bound by residues histidine 111, histidine 115, and histidine 121.

It belongs to the endoribonuclease YbeY family. Zn(2+) serves as cofactor.

Its subcellular location is the cytoplasm. Its function is as follows. Single strand-specific metallo-endoribonuclease involved in late-stage 70S ribosome quality control and in maturation of the 3' terminus of the 16S rRNA. This chain is Endoribonuclease YbeY, found in Pseudomonas putida (strain ATCC 47054 / DSM 6125 / CFBP 8728 / NCIMB 11950 / KT2440).